The sequence spans 97 residues: YcgL domain-containing protein PFL_1496 (97 aa).

Residues 3–87 (RICSIYKSPR…AEDEYIEHLP (85 aa)) enclose the YcgL domain.

This is YcgL domain-containing protein PFL_1496 from Pseudomonas fluorescens (strain ATCC BAA-477 / NRRL B-23932 / Pf-5).